A 252-amino-acid chain; its full sequence is MMLHAQHMPGQPGAPSLVFLHGFSGDCREWQPVGEQFHGCSRLYIDLPGHGGSAAIPVGGFADVIRLLRATLISYNILKFWLVGYSLGGRVAMMAACQGIPGLCGLVVEGGHPGLQNERARAERRLSDGRWAERFRHEPLTEVFHDWYQQPVFASLTAQQRQALTALRSQNNGETLAAMLEATSLAVQPDLREALNALAFPFYYLCGERDSKFRALAQEVAATCHVIRNAGHNAHRENPAGVVDSLAQILRL.

The protein belongs to the AB hydrolase superfamily. MenH family. In terms of assembly, monomer.

The catalysed reaction is 5-enolpyruvoyl-6-hydroxy-2-succinyl-cyclohex-3-ene-1-carboxylate = (1R,6R)-6-hydroxy-2-succinyl-cyclohexa-2,4-diene-1-carboxylate + pyruvate. It participates in quinol/quinone metabolism; 1,4-dihydroxy-2-naphthoate biosynthesis; 1,4-dihydroxy-2-naphthoate from chorismate: step 3/7. The protein operates within quinol/quinone metabolism; menaquinone biosynthesis. Catalyzes a proton abstraction reaction that results in 2,5-elimination of pyruvate from 2-succinyl-5-enolpyruvyl-6-hydroxy-3-cyclohexene-1-carboxylate (SEPHCHC) and the formation of 2-succinyl-6-hydroxy-2,4-cyclohexadiene-1-carboxylate (SHCHC). This chain is 2-succinyl-6-hydroxy-2,4-cyclohexadiene-1-carboxylate synthase, found in Salmonella paratyphi A (strain ATCC 9150 / SARB42).